A 319-amino-acid polypeptide reads, in one-letter code: ATP-dependent 6-phosphofructokinase (319 aa).

An ATP-binding site is contributed by glycine 11. 21-25 (RAVVR) contacts ADP. ATP-binding positions include 72–73 (RS) and 102–105 (GDGS). A Mg(2+)-binding site is contributed by aspartate 103. Substrate is bound at residue 125–127 (TID). Aspartate 127 serves as the catalytic Proton acceptor. ADP is bound at residue arginine 154. Substrate contacts are provided by residues arginine 162 and 169-171 (MGR). ADP-binding positions include 185–187 (GAE), arginine 211, and 213–215 (KKH). Substrate contacts are provided by residues glutamate 222, arginine 243, and 249-252 (HIQR).

This sequence belongs to the phosphofructokinase type A (PFKA) family. ATP-dependent PFK group I subfamily. Prokaryotic clade 'B1' sub-subfamily. Homotetramer. Requires Mg(2+) as cofactor.

It localises to the cytoplasm. The enzyme catalyses beta-D-fructose 6-phosphate + ATP = beta-D-fructose 1,6-bisphosphate + ADP + H(+). The protein operates within carbohydrate degradation; glycolysis; D-glyceraldehyde 3-phosphate and glycerone phosphate from D-glucose: step 3/4. Allosterically activated by ADP and other diphosphonucleosides, and allosterically inhibited by phosphoenolpyruvate. Catalyzes the phosphorylation of D-fructose 6-phosphate to fructose 1,6-bisphosphate by ATP, the first committing step of glycolysis. In Oceanobacillus iheyensis (strain DSM 14371 / CIP 107618 / JCM 11309 / KCTC 3954 / HTE831), this protein is ATP-dependent 6-phosphofructokinase.